Here is a 112-residue protein sequence, read N- to C-terminus: ATP synthase epsilon chain (112 aa).

The protein belongs to the ATPase epsilon chain family. F-type ATPases have 2 components, CF(1) - the catalytic core - and CF(0) - the membrane proton channel. CF(1) has five subunits: alpha(3), beta(3), gamma(1), delta(1), epsilon(1). CF(0) has three main subunits: a, b and c.

It is found in the cell inner membrane. Produces ATP from ADP in the presence of a proton gradient across the membrane. The polypeptide is ATP synthase epsilon chain (atpC) (Rickettsia prowazekii (strain Madrid E)).